The primary structure comprises 355 residues: Protein FIP1 (355 aa).

The next 4 helical transmembrane spans lie at 42–62 (YLYM…PWMF), 72–92 (LLCC…QYFV), 113–133 (VVRL…LVIV), and 149–169 (IIML…IGYV). Residues 220–337 (LHFLSEEILC…RMSNSELQKE (118 aa)) are a coiled coil. Over residues 331-340 (NSELQKEVAS) the composition is skewed to basic and acidic residues. The segment at 331–355 (NSELQKEVASTRRKQMLETTTSEQP) is disordered.

The protein belongs to the TMEM192 family. In terms of assembly, interacts with FRI.

The protein resides in the membrane. The chain is Protein FIP1 from Arabidopsis thaliana (Mouse-ear cress).